The primary structure comprises 1017 residues: Semaphorin-6D (1017 aa).

The N-terminal stretch at 1-20 is a signal peptide; the sequence is MRVFLLCAYILLLMISQLRA. The Extracellular portion of the chain corresponds to 21–606; sequence VSFPEDDEPL…GESNQMVHMN (586 aa). One can recognise a Sema domain in the interval 27–512; sequence DEPLNTVDYH…FSSCVIRIPL (486 aa). The N-linked (GlcNAc...) asparagine glycan is linked to Asn-51. 4 disulfide bridges follow: Cys-108-Cys-118, Cys-136-Cys-145, Cys-259-Cys-370, and Cys-284-Cys-329. The N-linked (GlcNAc...) asparagine glycan is linked to Asn-283. Residues Asn-435 and Asn-461 are each glycosylated (N-linked (GlcNAc...) asparagine). 4 disulfide bridges follow: Cys-477-Cys-506, Cys-515-Cys-533, Cys-521-Cys-568, and Cys-525-Cys-541. The 56-residue stretch at 514–569 folds into the PSI domain; that stretch reads RCERYGSCKKSCIASRDPYCGWLSQGSCGRVTPGMLAEGYEQDAEFGNTAHLGDCH. The chain crosses the membrane as a helical span at residues 607-627; sequence VLITCVFAAFVLGAFIAGVAV. Over 628-1017 the chain is Cytoplasmic; the sequence is YCYRDMFVRK…SVRPLNKYTY (390 aa). Residues Ser-667, Ser-678, and Ser-688 each carry the phosphoserine modification. 4 disordered regions span residues 688 to 719, 731 to 769, 783 to 818, and 873 to 912; these read SRKE…PTPE, AMKS…GHIP, TSFS…RSVD, and LYSP…HKNS. Thr-717 carries the phosphothreonine modification. Positions 734–749 are enriched in basic and acidic residues; the sequence is SHSEKAHGHGASRKET. 3 positions are modified to phosphoserine: Ser-875, Ser-901, and Ser-927. The span at 875–886 shows a compositional bias: polar residues; it reads SPPSTLPRNSPT. Residues 965–981 are compositionally biased toward polar residues; the sequence is LQPSLSRQSSYTSNGTL. The tract at residues 965-1017 is disordered; it reads LQPSLSRQSSYTSNGTLPRTGLKRTPSLKPDVPPKPSFVPQTPSVRPLNKYTY.

It belongs to the semaphorin family.

It localises to the cell membrane. In terms of biological role, shows growth cone collapsing activity on dorsal root ganglion (DRG) neurons in vitro. May be a stop signal for the DRG neurons in their target areas, and possibly also for other neurons. May also be involved in the maintenance and remodeling of neuronal connections. Ligand of TREM2 with PLXNA1 as coreceptor in dendritic cells, plays a role in the generation of immune responses and skeletal homeostasis. The sequence is that of Semaphorin-6D (SEMA6D) from Pongo abelii (Sumatran orangutan).